A 731-amino-acid polypeptide reads, in one-letter code: Dynein axonemal intermediate chain 7 (731 aa).

Disordered regions lie at residues 1–50 (MPPK…NERL) and 285–320 (QNTESSAAVHNGKMEGERDESESSKQVDECHSVRSE). 2 stretches are compositionally biased toward basic and acidic residues: residues 17-50 (KAEKERLQREEEEKRQREAEEARLIAEREENERL) and 296-320 (GKMEGERDESESSKQVDECHSVRSE).

Belongs to the DNAI7 family. As to quaternary structure, part of the multisubunit axonemal dynein complex formed at least of two heavy chains and a number of intermediate and light chains.

The protein resides in the cell projection. Its subcellular location is the cilium. The protein localises to the cytoplasm. Its function is as follows. Via its association with the multisubunit axonemal dynein complex, may be potentially involved in the regulation of cilia function. In Danio rerio (Zebrafish), this protein is Dynein axonemal intermediate chain 7 (dnai7).